Here is a 74-residue protein sequence, read N- to C-terminus: MPVINIEDLTEKDKLKMEVDQLKKEVTLERMLVSKCCEEFRDYVEERSGEDPLVKGIPEDKNPFKELKGGCVIS.

Cysteine methyl ester is present on Cys71. Cys71 carries the S-farnesyl cysteine lipid modification. Residues Val72–Ser74 constitute a propeptide, removed in mature form.

The protein belongs to the G protein gamma family. In terms of assembly, g proteins are composed of 3 units, alpha, beta and gamma. In terms of tissue distribution, retinal rod outer segment.

The protein localises to the cell membrane. Functionally, guanine nucleotide-binding proteins (G proteins) are involved as a modulator or transducer in various transmembrane signaling systems. The beta and gamma chains are required for the GTPase activity, for replacement of GDP by GTP, and for G protein-effector interaction. This is Guanine nucleotide-binding protein G(T) subunit gamma-T1 (GNGT1) from Bos taurus (Bovine).